Consider the following 734-residue polypeptide: NAD(P)H-quinone oxidoreductase subunit 5, chloroplastic (734 aa).

12 helical membrane-spanning segments follow: residues 9 to 29 (WIIP…LFFF), 40 to 60 (YAII…DLLW), 89 to 109 (IDPL…TVMI), 121 to 140 (YVRF…GLVI), 144 to 166 (LIQI…GFWF), 185 to 205 (GDFG…SFKF), 219 to 239 (HEVS…GPVA), 258 to 278 (TPIS…FLVA), 289 to 311 (LVMS…VALA), 318 to 338 (VLAY…GIGS), 395 to 415 (GTTF…ACFW), and 425 to 445 (WLYF…TGFY). Residues 512–534 (DKNVKNSVSTQSSREEYSPHPKE) are disordered. Basic and acidic residues predominate over residues 524–534 (SREEYSPHPKE). The next 3 membrane-spanning stretches (helical) occupy residues 539–559 (MLFP…IGVP), 601–621 (VGTA…IPFF), and 707–727 (ISYY…VVIN).

This sequence belongs to the complex I subunit 5 family. As to quaternary structure, NDH is composed of at least 16 different subunits, 5 of which are encoded in the nucleus.

Its subcellular location is the plastid. The protein resides in the chloroplast thylakoid membrane. The enzyme catalyses a plastoquinone + NADH + (n+1) H(+)(in) = a plastoquinol + NAD(+) + n H(+)(out). It catalyses the reaction a plastoquinone + NADPH + (n+1) H(+)(in) = a plastoquinol + NADP(+) + n H(+)(out). In terms of biological role, NDH shuttles electrons from NAD(P)H:plastoquinone, via FMN and iron-sulfur (Fe-S) centers, to quinones in the photosynthetic chain and possibly in a chloroplast respiratory chain. The immediate electron acceptor for the enzyme in this species is believed to be plastoquinone. Couples the redox reaction to proton translocation, and thus conserves the redox energy in a proton gradient. This is NAD(P)H-quinone oxidoreductase subunit 5, chloroplastic (ndhF) from Huperzia lucidula (Shining clubmoss).